The following is a 142-amino-acid chain: Large ribosomal subunit protein uL16 (142 aa).

The protein belongs to the universal ribosomal protein uL16 family. Part of the 50S ribosomal subunit.

Functionally, binds 23S rRNA and is also seen to make contacts with the A and possibly P site tRNAs. This chain is Large ribosomal subunit protein uL16, found in Trichormus variabilis (strain ATCC 29413 / PCC 7937) (Anabaena variabilis).